A 676-amino-acid chain; its full sequence is Envelope glycoprotein (676 aa).

A signal peptide spans 1-32; the sequence is MGASGILQLPRERFRKTSFFVWVIILFHKVFS. The Extracellular portion of the chain corresponds to 33-650; sequence IPLGVVHNNT…GSNWWTGWKQ (618 aa). N40 carries N-linked (GlcNAc...) asparagine; by host glycosylation. 5 disulfides stabilise this stretch: C53–C609, C108–C135, C121–C147, C511–C556, and C601–C608. Positions 54-201 are receptor-binding; that stretch reads RDKLSSTSQL…DFFQSPPLHE (148 aa). Residues N204, N228, N257, N268, and N296 are each glycosylated (N-linked (GlcNAc...) asparagine; by host). Residues 305 to 485 are mucin-like region; it reads ELSFVPVPET…LSGPGFLTNT (181 aa). The segment at 356–463 is disordered; it reads IKGKDTMPTT…PTTLPEQHTA (108 aa). The segment covering 361 to 374 has biased composition (low complexity); sequence TMPTTVTGVPTTTP. Over residues 402–422 the composition is skewed to polar residues; it reads TTQPAKTTSQPTNSTESTTLN. Residue N414 is glycosylated (N-linked (GlcNAc...) asparagine; by host). Positions 423-440 are enriched in low complexity; it reads PTSEPSSRGTGPSSPTVP. Residue N441 is glycosylated (N-linked (GlcNAc...) asparagine; by host). Residues 452-463 are compositionally biased toward polar residues; sequence TTPTTLPEQHTA. A fusion peptide region spans residues 524 to 539; it reads GAAIGLAWIPYFGPAA. The stretch at 554 to 595 forms a coiled coil; that stretch reads LICGLRQLANETTQALQLFLRATTELRTFSILNRKAIDFLLQ. An N-linked (GlcNAc...) asparagine; by host glycan is attached at N563. Positions 615–634 form a coiled coil; the sequence is WTKNITDKIDQIIHDFVDNN. N618 carries N-linked (GlcNAc...) asparagine; by host glycosylation. A helical transmembrane segment spans residues 651–671; the sequence is WVPAGIGITGVIIAIIALLCI. 2 S-palmitoyl cysteine; by host lipidation sites follow: C670 and C672. Residues 672-676 are Cytoplasmic-facing; that stretch reads CKFML.

It belongs to the filoviruses glycoprotein family. Homotrimer; each monomer consists of a GP1 and a GP2 subunit linked by disulfide bonds. The resulting peplomers (GP1,2) protrude from the virus surface as spikes. GP1 and GP2delta are part of GP1,2delta soluble complexes released by ectodomain shedding. GP1,2 interacts with host integrin ITGAV/alpha-V and CLEC10A. Also binds human CD209 and CLEC4M (collectively referred to as DC-SIGN(R)), as well as human FOLR1. Interacts with host entry receptor NPC1. In terms of processing, the signal peptide region modulates GP's high mannose glycosylation, thereby determining the efficiency of the interactions with DC-SIGN(R). Post-translationally, N-glycosylated. O-glycosylated in the mucin-like region. In terms of processing, palmitoylation of GP2 is not required for its function. Post-translationally, specific enzymatic cleavages in vivo yield mature proteins. The precursor is processed into GP1 and GP2 by host cell furin in the trans Golgi, and maybe by other host proteases, to yield the mature GP1 and GP2 proteins. The cleavage site corresponds to the furin optimal cleavage sequence [KR]-X-[KR]-R. This cleavage does not seem to be required for function. After the internalization of the virus into cell endosomes, GP1 C-terminus is removed by the endosomal proteases cathepsin B, cathepsin L, or both, leaving a 19-kDa N-terminal fragment which is further digested by cathepsin B. Proteolytic processing of GP1,2 by host ADAM17 can remove the transmembrane anchor of GP2 and leads to shedding of complexes consisting in GP1 and truncated GP2 (GP1,2delta).

It localises to the virion membrane. It is found in the host cell membrane. Its subcellular location is the secreted. Its function is as follows. GP1 is responsible for binding to the receptor(s) on target cells. Interacts with CD209/DC-SIGN and CLEC4M/DC-SIGNR which act as cofactors for virus entry into the host cell. Binding to CD209 and CLEC4M, which are respectively found on dendritic cells (DCs), and on endothelial cells of liver sinusoids and lymph node sinuses, facilitate infection of macrophages and endothelial cells. These interactions not only facilitate virus cell entry, but also allow capture of viral particles by DCs and subsequent transmission to susceptible cells without DCs infection (trans infection). Binding to the macrophage specific lectin CLEC10A also seems to enhance virus infectivity. Interaction with FOLR1/folate receptor alpha may be a cofactor for virus entry in some cell types, although results are contradictory. Members of the Tyro3 receptor tyrosine kinase family also seem to be cell entry factors in filovirus infection. Once attached, the virions are internalized through clathrin-dependent endocytosis and/or macropinocytosis. After internalization of the virus into the endosomes of the host cell, proteolysis of GP1 by two cysteine proteases, CTSB/cathepsin B and CTSL/cathepsin L presumably induces a conformational change of GP2, unmasking its fusion peptide and initiating membranes fusion. Functionally, GP2 acts as a class I viral fusion protein. Under the current model, the protein has at least 3 conformational states: pre-fusion native state, pre-hairpin intermediate state, and post-fusion hairpin state. During viral and target cell membrane fusion, the coiled coil regions (heptad repeats) assume a trimer-of-hairpins structure, positioning the fusion peptide in close proximity to the C-terminal region of the ectodomain. The formation of this structure appears to drive apposition and subsequent fusion of viral and target cell membranes. Responsible for penetration of the virus into the cell cytoplasm by mediating the fusion of the membrane of the endocytosed virus particle with the endosomal membrane. Low pH in endosomes induces an irreversible conformational change in GP2, releasing the fusion hydrophobic peptide. In terms of biological role, GP1,2 which is the disulfid-linked complex of GP1 and GP2, mediates endothelial cell activation and decreases endothelial barrier function. Mediates activation of primary macrophages. At terminal stages of the viral infection, when its expression is high, GP1,2 down-modulates the expression of various host cell surface molecules that are essential for immune surveillance and cell adhesion. Down-modulates integrins ITGA1, ITGA2, ITGA3, ITGA4, ITGA5, ITGA6, ITGAV and ITGB1. GP1,2 alters the cellular recycling of the dimer alpha-V/beta-3 via a dynamin-dependent pathway. Decrease in the host cell surface expression of various adhesion molecules may lead to cell detachment, contributing to the disruption of blood vessel integrity and hemorrhages developed during Ebola virus infection (cytotoxicity). This cytotoxicity appears late in the infection, only after the massive release of viral particles by infected cells. Down-modulation of host MHC-I, leading to altered recognition by immune cells, may explain the immune suppression and inflammatory dysfunction linked to Ebola infection. Also down-modulates EGFR surface expression. Counteracts the antiviral effect of host tetherin. GP2delta is part of the complex GP1,2delta released by host ADAM17 metalloprotease. This secreted complex may play a role in the pathogenesis of the virus by efficiently blocking the neutralizing antibodies that would otherwise neutralize the virus surface glycoproteins GP1,2. Might therefore contribute to the lack of inflammatory reaction seen during infection in spite the of extensive necrosis and massive virus production. GP1,2delta does not seem to be involved in activation of primary macrophages. The polypeptide is Envelope glycoprotein (GP) (Tai Forest ebolavirus (strain Cote d'Ivoire-94) (TAFV)).